A 375-amino-acid chain; its full sequence is 2-isopropylmalate synthase (375 aa).

A Pyruvate carboxyltransferase domain is found at 1-124 (GRTSIDNLCR…FTNIKHNELY (124 aa)). Positions 59, 61, and 95 each coordinate Mn(2+). A regulatory domain region spans residues 250 to 375 (QLKYFSIHSG…SKIKNIKNKK (126 aa)).

It belongs to the alpha-IPM synthase/homocitrate synthase family. LeuA type 1 subfamily. As to quaternary structure, homodimer.

The protein localises to the cytoplasm. It catalyses the reaction 3-methyl-2-oxobutanoate + acetyl-CoA + H2O = (2S)-2-isopropylmalate + CoA + H(+). It participates in amino-acid biosynthesis; L-leucine biosynthesis; L-leucine from 3-methyl-2-oxobutanoate: step 1/4. In terms of biological role, catalyzes the condensation of the acetyl group of acetyl-CoA with 3-methyl-2-oxobutanoate (2-ketoisovalerate) to form 3-carboxy-3-hydroxy-4-methylpentanoate (2-isopropylmalate). This is 2-isopropylmalate synthase from Buchnera aphidicola subsp. Thelaxes suberi.